Consider the following 169-residue polypeptide: Probable inosine/xanthosine triphosphatase (169 aa).

Substrate is bound at residue 7 to 12; sequence STNKAK. Position 35 (Glu-35) interacts with Mg(2+).

Belongs to the YjjX NTPase family. As to quaternary structure, homodimer. The cofactor is Mg(2+). Mn(2+) serves as cofactor.

It catalyses the reaction XTP + H2O = XDP + phosphate + H(+). It carries out the reaction ITP + H2O = IDP + phosphate + H(+). In terms of biological role, phosphatase that hydrolyzes non-canonical purine nucleotides such as XTP and ITP to their respective diphosphate derivatives. Probably excludes non-canonical purines from DNA/RNA precursor pool, thus preventing their incorporation into DNA/RNA and avoiding chromosomal lesions. This chain is Probable inosine/xanthosine triphosphatase, found in Sulfurisphaera tokodaii (strain DSM 16993 / JCM 10545 / NBRC 100140 / 7) (Sulfolobus tokodaii).